A 306-amino-acid polypeptide reads, in one-letter code: Probable rRNA-processing protein EBP2 (306 aa).

The residue at position 1 (methionine 1) is an N-acetylmethionine. 3 disordered regions span residues 1–20 (MDTP…LASD), 75–103 (GPVP…DDFQ), and 150–169 (IRQK…KAKQ). The residue at position 3 (threonine 3) is a Phosphothreonine. Phosphoserine occurs at positions 7, 9, 11, and 13. The span at 81-90 (SETQPTPQNQ) shows a compositional bias: polar residues. Over residues 91-103 (DQKKGVNPEDDFQ) the composition is skewed to basic and acidic residues. A Glycyl lysine isopeptide (Lys-Gly) (interchain with G-Cter in SUMO2) cross-link involves residue lysine 93. The stretch at 135–171 (DYFAEMAKSDQQMQKIRQKLQTKQAAMEKSEKAKQLR) forms a coiled coil. Glycyl lysine isopeptide (Lys-Gly) (interchain with G-Cter in SUMO2) cross-links involve residues lysine 179 and lysine 218. A compositionally biased stretch (basic and acidic residues) spans 213 to 224 (LEGDQKPVERSA). The disordered stretch occupies residues 213–306 (LEGDQKPVER…ARQKLKSKAR (94 aa)). Phosphoserine occurs at positions 264 and 270. Residues 274 to 306 (KVAHGKGSRRPGKKGANKRPGKRARQKLKSKAR) are compositionally biased toward basic residues.

It belongs to the EBP2 family. As to quaternary structure, interacts with WDR46.

It is found in the nucleus. The protein localises to the nucleolus. Functionally, required for the processing of the 27S pre-rRNA. The protein is Probable rRNA-processing protein EBP2 (Ebna1bp2) of Mus musculus (Mouse).